The sequence spans 392 residues: Tropomodulin (392 aa).

3 disordered regions span residues 1-30, 59-90, and 118-138; these read MSQA…QLPS, DLNN…GPYK, and QKRG…PENG. The segment covering 16-29 has biased composition (polar residues); the sequence is SAPSANSQQGTQLP. Composition is skewed to basic and acidic residues over residues 76 to 90 and 122 to 138; these read RCRD…GPYK and KVYD…PENG.

The protein belongs to the tropomodulin family. As to quaternary structure, binds to the N-terminus of actin.

It localises to the cytoplasm. It is found in the cytoskeleton. In terms of biological role, acts as the pointed end capping protein which maintains the length and dynamics of the actin filament. Blocks the elongation and depolymerization of the actin filaments at the pointed end. The polypeptide is Tropomodulin (unc-94) (Caenorhabditis elegans).